Consider the following 679-residue polypeptide: Leucine-rich repeat, immunoglobulin-like domain and transmembrane domain-containing protein 3 (679 aa).

The signal sequence occupies residues 1–19; sequence MHLFACLCIVLSFLEGVGC. Residues 20 to 582 are Lumenal-facing; sequence LCPSQCTCDY…RVEGDDSQWS (563 aa). 5 LRR repeats span residues 56–79, 80–103, 104–128, 129–151, and 152–175; these read PVDT…AFYY, LVEL…SFYN, LKQL…LLDM, PLLR…ALRY, and LKNL…FLES. Positions 201-253 constitute an LRRCT domain; the sequence is NPWFCDCHISKMIELSKVVDPAIVLLDPLMTCSEPERLTGILFQRAELEHCLK. One can recognise an Ig-like domain in the interval 254–344; that stretch reads PSVMTSATKI…GMSEAVVTVT (91 aa). An intrachain disulfide couples cysteine 275 to cysteine 328. N-linked (GlcNAc...) asparagine glycosylation occurs at asparagine 296. The disordered stretch occupies residues 351-375; sequence TPIPPDTSERTGDHPEWDVQPGSGR. The segment covering 357-367 has biased composition (basic and acidic residues); the sequence is TSERTGDHPEW. The region spanning 486-574 is the Fibronectin type-III domain; the sequence is AIENLRVVSE…QCITFSTERV (89 aa). The chain crosses the membrane as a helical span at residues 583-603; it reads LLLVVTSTACVVILPLICFLL. Over 604–679 the chain is Cytoplasmic; the sequence is YKVCKLQCKS…SEGSRPEYYC (76 aa).

Glycosylated. Detected in the outer plexiform layer (OPL) of the retina where it localizes to ON-bipolar cells (at protein level).

The protein resides in the cell projection. It is found in the dendrite. The protein localises to the perikaryon. It localises to the endoplasmic reticulum membrane. In terms of biological role, plays a role in the synapse formation and synaptic transmission between cone photoreceptor cells and retinal bipolar cells. Required for normal transmission of a light-evoked stimulus from the cone photoreceptor cells to the ON-bipolar cells and ON-ganglion cells in the inner retina. Required in retinal ON-bipolar cells for normal localization of the cation channel TRPM1 at dendrite tips. Seems to play a specific role in synaptic contacts made by ON-bipolar cells with cone photoreceptor pedicles. May also have a role in cone synapse formation. Might facilitate FGFR1 exit from the endoplasmic reticulum to the Golgi. Could be a regulator of the FGFRs. In Homo sapiens (Human), this protein is Leucine-rich repeat, immunoglobulin-like domain and transmembrane domain-containing protein 3 (LRIT3).